Reading from the N-terminus, the 313-residue chain is NAD-capped RNA hydrolase NudC (313 aa).

Residue Arg-111 participates in substrate binding. The region spanning 168-293 (PRIDPAVICL…DWSSASESKL (126 aa)) is the Nudix hydrolase domain. Residues Ala-202, Glu-218, and Glu-222 each coordinate a divalent metal cation. The Nudix box motif lies at 203–224 (GFVEAGESFEVCVAREIREEIG). Residue 236–243 (QQWPFPRS) participates in substrate binding. Glu-264 is an a divalent metal cation binding site.

Belongs to the Nudix hydrolase family. NudC subfamily. In terms of assembly, homodimer. It depends on Mg(2+) as a cofactor. Mn(2+) serves as cofactor.

It carries out the reaction a 5'-end NAD(+)-phospho-ribonucleoside in mRNA + H2O = a 5'-end phospho-adenosine-phospho-ribonucleoside in mRNA + beta-nicotinamide D-ribonucleotide + 2 H(+). It catalyses the reaction NAD(+) + H2O = beta-nicotinamide D-ribonucleotide + AMP + 2 H(+). The catalysed reaction is NADH + H2O = reduced beta-nicotinamide D-ribonucleotide + AMP + 2 H(+). Functionally, mRNA decapping enzyme that specifically removes the nicotinamide adenine dinucleotide (NAD) cap from a subset of mRNAs by hydrolyzing the diphosphate linkage to produce nicotinamide mononucleotide (NMN) and 5' monophosphate mRNA. The NAD-cap is present at the 5'-end of some mRNAs and stabilizes RNA against 5'-processing. Has preference for mRNAs with a 5'-end purine. Catalyzes the hydrolysis of a broad range of dinucleotide pyrophosphates. The sequence is that of NAD-capped RNA hydrolase NudC from Mycobacterium tuberculosis (strain ATCC 25177 / H37Ra).